We begin with the raw amino-acid sequence, 234 residues long: Glucosamine-6-phosphate deaminase (234 aa).

The active-site Proton acceptor; for enolization step is the Asp63. Asn129 acts as the For ring-opening step in catalysis. The Proton acceptor; for ring-opening step role is filled by His131. Glu136 acts as the For ring-opening step in catalysis.

The protein belongs to the glucosamine/galactosamine-6-phosphate isomerase family. NagB subfamily.

It catalyses the reaction alpha-D-glucosamine 6-phosphate + H2O = beta-D-fructose 6-phosphate + NH4(+). It participates in amino-sugar metabolism; N-acetylneuraminate degradation; D-fructose 6-phosphate from N-acetylneuraminate: step 5/5. Its function is as follows. Catalyzes the reversible isomerization-deamination of glucosamine 6-phosphate (GlcN6P) to form fructose 6-phosphate (Fru6P) and ammonium ion. The sequence is that of Glucosamine-6-phosphate deaminase from Listeria innocua serovar 6a (strain ATCC BAA-680 / CLIP 11262).